We begin with the raw amino-acid sequence, 76 residues long: Secreted RxLR effector protein 31 (76 aa).

The first 24 residues, 1–24, serve as a signal peptide directing secretion; sequence MRHCACLFHLFLIGFLCNVYFSAC. The RxLR-dEER signature appears at 49 to 64; the sequence is RILRANDSEFLLTEER. The N-linked (GlcNAc...) asparagine glycan is linked to Asn54.

It belongs to the RxLR effector family.

Its subcellular location is the secreted. It localises to the host nucleus. It is found in the host cytoplasm. Its function is as follows. Secreted effector that dos not suppress the host cell death induced by cell death-inducing proteins. This Plasmopara viticola (Downy mildew of grapevine) protein is Secreted RxLR effector protein 31.